The following is a 397-amino-acid chain: MNIKEVDVLIIGAGPAGSLAAREASKNGAKTLIIDKKSEIGTPKRCAEGIMSGVLERVHITPDERWIARKIDGARIVSPNNTSAWFTPETLETPATGIILERKVFDKHMTMDAIREGAEVMIKTEALSMKREGDGYLVDIKSFNKEYNQIKAHIVIGADGPEGHVARWAELNTKVPLAEMESGLQYEMTNLKMKNNSVIQFFFGSVAPGGYAWIFPKGYDTANVGIDISGIKAEKSAVKYLNDFIANCDETKDGQIVEINAGGNPLCGIFDKIITDNVMLVGDAAGCVSPITGGGIDTALESGMIAGRVAAKAIKNRDYSEEKLQEYADYIDSHLGKKFKKYIAIRDVLYNSSDEDLDEYITALANANITKLSTKSLIKVVMKISPRKLFKLRKILL.

FAD contacts are provided by Ala16, Asp35, Cys46, Ala47, Gly49, Arg102, Ala126, Asp283, Gly295, and Ile296. Lys338 is a binding site for a 2,3-bis-O-(geranylgeranyl)-sn-glycerol 1-phospholipid.

It belongs to the geranylgeranyl reductase family. DGGGPL reductase subfamily. FAD is required as a cofactor.

It catalyses the reaction a 2,3-bis-O-phytanyl-sn-glycerol 1-phospholipid + 8 A = a 2,3-bis-O-(geranylgeranyl)-sn-glycerol 1-phospholipid + 8 AH2. It carries out the reaction 2,3-bis-O-(phytanyl)-sn-glycerol 1-phosphate + 8 A = 2,3-bis-O-(geranylgeranyl)-sn-glycerol 1-phosphate + 8 AH2. The catalysed reaction is CDP-2,3-bis-O-(geranylgeranyl)-sn-glycerol + 8 AH2 = CDP-2,3-bis-O-(phytanyl)-sn-glycerol + 8 A. The enzyme catalyses archaetidylserine + 8 AH2 = 2,3-bis-O-phytanyl-sn-glycero-3-phospho-L-serine + 8 A. It participates in membrane lipid metabolism; glycerophospholipid metabolism. Functionally, is involved in the reduction of 2,3-digeranylgeranylglycerophospholipids (unsaturated archaeols) into 2,3-diphytanylglycerophospholipids (saturated archaeols) in the biosynthesis of archaeal membrane lipids. Catalyzes the formation of archaetidic acid (2,3-di-O-phytanyl-sn-glyceryl phosphate) from 2,3-di-O-geranylgeranylglyceryl phosphate (DGGGP) via the hydrogenation of each double bond of the isoprenoid chains. Is also probably able to reduce double bonds of geranyl groups in CDP-2,3-bis-O-(geranylgeranyl)-sn-glycerol and archaetidylserine, thus acting at various stages in the biosynthesis of archaeal membrane lipids. The polypeptide is Digeranylgeranylglycerophospholipid reductase 3 (Methanosphaera stadtmanae (strain ATCC 43021 / DSM 3091 / JCM 11832 / MCB-3)).